The sequence spans 41 residues: trp operon leader peptide (41 aa).

Its function is as follows. This protein is involved in control of the biosynthesis of tryptophan. The protein is trp operon leader peptide (trpL) of Vibrio parahaemolyticus serotype O3:K6 (strain RIMD 2210633).